A 492-amino-acid chain; its full sequence is N-succinylglutamate 5-semialdehyde dehydrogenase (492 aa).

220–225 (GSANTG) provides a ligand contact to NAD(+). Active-site residues include Glu-243 and Cys-277.

The protein belongs to the aldehyde dehydrogenase family. AstD subfamily.

It carries out the reaction N-succinyl-L-glutamate 5-semialdehyde + NAD(+) + H2O = N-succinyl-L-glutamate + NADH + 2 H(+). Its pathway is amino-acid degradation; L-arginine degradation via AST pathway; L-glutamate and succinate from L-arginine: step 4/5. Its function is as follows. Catalyzes the NAD-dependent reduction of succinylglutamate semialdehyde into succinylglutamate. In Escherichia coli O157:H7, this protein is N-succinylglutamate 5-semialdehyde dehydrogenase.